A 652-amino-acid chain; its full sequence is Chaperone protein HtpG (652 aa).

The a; substrate-binding stretch occupies residues 1-351 (MTEHVEQLEF…AQDLSLNVSR (351 aa)). The tract at residues 352–568 (EILQQDRQIQ…VFDFTPMLER (217 aa)) is b. The c stretch occupies residues 569 to 652 (MYRASGQPVP…ILTDRLTRTL (84 aa)).

It belongs to the heat shock protein 90 family. In terms of assembly, homodimer.

The protein localises to the cytoplasm. Functionally, molecular chaperone. Has ATPase activity. The protein is Chaperone protein HtpG of Nocardia farcinica (strain IFM 10152).